Here is a 72-residue protein sequence, read N- to C-terminus: MWIPWQDLSPVTLENLIESFVLREGTDYGEHERTLEQKVADVKRQLQCGEAVLVCSELHETVNIMPRSQFRE.

This sequence belongs to the UPF0270 family.

This chain is UPF0270 protein YheU, found in Shigella flexneri serotype 5b (strain 8401).